A 23-amino-acid chain; its full sequence is Phallacidin proprotein (23 aa).

Residue P1 is a propeptide. Residues 2–8 (AWLVDCP) constitute a cross-link (cyclopeptide (Ala-Pro)). The 2'-cysteinyl-6'-hydroxytryptophan sulfoxide (Trp-Cys) cross-link spans 3 to 7 (WLVDC). A propeptide spanning residues 9 to 23 (CVGDDVNFILTRGQK) is cleaved from the precursor.

This sequence belongs to the MSDIN fungal toxin family. Processed by the macrocyclase-peptidase enzyme POPB to yield a toxic cyclic heptapeptide. POPB first removes 10 residues from the N-terminus. Conformational trapping of the remaining peptide forces the enzyme to release this intermediate rather than proceed to macrocyclization. The enzyme rebinds the remaining peptide in a different conformation and catalyzes macrocyclization of the N-terminal 7 residues.

Functionally, major toxin that belongs to the bicyclic heptapeptides called phallotoxins. Although structurally related to amatoxins, phallotoxins have a different mode of action, which is the stabilization of F-actin. Phallotoxins are poisonous when administered parenterally, but not orally because of poor absorption. The sequence is that of Phallacidin proprotein from Amanita fuligineoides.